We begin with the raw amino-acid sequence, 734 residues long: Subtilisin-like protease SBT3.2 (734 aa).

Residues 1 to 19 (MTRALILVAICLMLTLNNA) form the signal peptide. Positions 20 to 88 (AETKVHIVYL…ESTLRFYELQ (69 aa)) are cleaved as a propeptide — activation peptide. One can recognise a Peptidase S8 domain in the interval 92–581 (TWDYLQHTSK…GGVVNSEKAA (490 aa)). The N-linked (GlcNAc...) asparagine glycan is linked to Asn-108. Asp-122 serves as the catalytic Charge relay system. The N-linked (GlcNAc...) asparagine glycan is linked to Asn-143. His-179 serves as the catalytic Charge relay system. N-linked (GlcNAc...) asparagine glycans are attached at residues Asn-326 and Asn-355. Residues 361-438 (VCEDLAKNPA…ELGTDILFYI (78 aa)) enclose the PA domain. Asn-497 is a glycosylation site (N-linked (GlcNAc...) asparagine). Ser-512 (charge relay system) is an active-site residue. Asn-669 carries N-linked (GlcNAc...) asparagine glycosylation.

The protein belongs to the peptidase S8 family.

It is found in the secreted. In Arabidopsis thaliana (Mouse-ear cress), this protein is Subtilisin-like protease SBT3.2.